Here is a 317-residue protein sequence, read N- to C-terminus: Homoserine O-succinyltransferase (317 aa).

Cysteine 142 (acyl-thioester intermediate) is an active-site residue. Substrate is bound by residues lysine 163 and serine 192. The active-site Proton acceptor is histidine 235. Glutamate 237 is a catalytic residue. Arginine 249 is a substrate binding site.

This sequence belongs to the MetA family.

Its subcellular location is the cytoplasm. It catalyses the reaction L-homoserine + succinyl-CoA = O-succinyl-L-homoserine + CoA. It functions in the pathway amino-acid biosynthesis; L-methionine biosynthesis via de novo pathway; O-succinyl-L-homoserine from L-homoserine: step 1/1. Its function is as follows. Transfers a succinyl group from succinyl-CoA to L-homoserine, forming succinyl-L-homoserine. The protein is Homoserine O-succinyltransferase of Aeromonas hydrophila subsp. hydrophila (strain ATCC 7966 / DSM 30187 / BCRC 13018 / CCUG 14551 / JCM 1027 / KCTC 2358 / NCIMB 9240 / NCTC 8049).